Reading from the N-terminus, the 229-residue chain is MSQPRPLLSPPETEEQLLAQAQQLSGYTLGELAALAGLVTPENLKRDKGWIGVLLEIWLGASAGSKPEQDFAALGVELKTIPVDSLGRPLETTFVCVAPLTGNSGVTWETSHVRHKLKRVLWIPVEGERSIPLAKRRVGSPLLWSPNEEEDRQLREDWEELMDMIVLGQIERITARHGEYLQIRPKAANAKALTEAIGARGERILTLPRGFYLKKNFTSALLARHFLIQ.

Belongs to the MutH family.

Its subcellular location is the cytoplasm. Sequence-specific endonuclease that cleaves unmethylated GATC sequences. It is involved in DNA mismatch repair. The chain is DNA mismatch repair protein MutH from Escherichia coli O45:K1 (strain S88 / ExPEC).